The following is a 364-amino-acid chain: Aminomethyltransferase (364 aa).

This sequence belongs to the GcvT family. In terms of assembly, the glycine cleavage system is composed of four proteins: P, T, L and H.

It carries out the reaction N(6)-[(R)-S(8)-aminomethyldihydrolipoyl]-L-lysyl-[protein] + (6S)-5,6,7,8-tetrahydrofolate = N(6)-[(R)-dihydrolipoyl]-L-lysyl-[protein] + (6R)-5,10-methylene-5,6,7,8-tetrahydrofolate + NH4(+). Functionally, the glycine cleavage system catalyzes the degradation of glycine. This Anoxybacillus flavithermus (strain DSM 21510 / WK1) protein is Aminomethyltransferase.